A 744-amino-acid chain; its full sequence is Collagen alpha-1(VIII) chain (744 aa).

Residues methionine 1–leucine 24 form the signal peptide. The segment at alanine 29–arginine 118 is nonhelical region (NC2). The segment covering lysine 101–glycine 110 has biased composition (basic and acidic residues). Disordered stretches follow at residues lysine 101 to leucine 395, glycine 412 to glycine 439, and glycine 457 to leucine 590. Residues glycine 119–proline 572 are triple-helical region (COL1). A compositionally biased stretch (pro residues) spans proline 129–leucine 138. Positions lysine 169 to methionine 191 are enriched in low complexity. Positions glycine 204 to glycine 218 are enriched in gly residues. Residues proline 298–valine 307 show a composition bias toward low complexity. Composition is skewed to gly residues over residues glycine 329–glycine 338 and glycine 412–glycine 421. Low complexity-rich tracts occupy residues leucine 470–serine 507 and proline 548–proline 557. Positions leucine 559–serine 579 are enriched in pro residues. Residues alanine 573–methionine 744 form a nonhelical region (NC1) region. The C1q domain maps to proline 611–methionine 744.

In terms of assembly, homotrimers, or heterotrimers in association with alpha 2(VIII) type collagens. Four homotrimers can form a tetrahedron stabilized by central interacting C-terminal NC1 trimers. Prolines at the third position of the tripeptide repeating unit (G-X-Y) are hydroxylated in some or all of the chains. Post-translationally, proteolytically cleaved by neutrophil elastase, in vitro. Proteolytic processing produces the C-terminal NC1 domain fragment, vastatin. As to expression, high levels in calvarium, eye and skin of newborn mice; also in various epithelial, endothelial and mesenchymal cells.

The protein localises to the secreted. It is found in the extracellular space. The protein resides in the extracellular matrix. It localises to the basement membrane. Macromolecular component of the subendothelium. Major component of the Descemet's membrane (basement membrane) of corneal endothelial cells. Also a component of the endothelia of blood vessels. Necessary for migration and proliferation of vascular smooth muscle cells and thus, has a potential role in the maintenance of vessel wall integrity and structure, in particular in atherogenesis. In terms of biological role, vastatin, the C-terminal fragment comprising the NC1 domain, inhibits aortic endothelial cell proliferation and causes cell apoptosis. The chain is Collagen alpha-1(VIII) chain (Col8a1) from Mus musculus (Mouse).